The primary structure comprises 581 residues: Proline--tRNA ligase (581 aa).

The protein belongs to the class-II aminoacyl-tRNA synthetase family. ProS type 1 subfamily. As to quaternary structure, homodimer.

Its subcellular location is the cytoplasm. It catalyses the reaction tRNA(Pro) + L-proline + ATP = L-prolyl-tRNA(Pro) + AMP + diphosphate. Catalyzes the attachment of proline to tRNA(Pro) in a two-step reaction: proline is first activated by ATP to form Pro-AMP and then transferred to the acceptor end of tRNA(Pro). As ProRS can inadvertently accommodate and process non-cognate amino acids such as alanine and cysteine, to avoid such errors it has two additional distinct editing activities against alanine. One activity is designated as 'pretransfer' editing and involves the tRNA(Pro)-independent hydrolysis of activated Ala-AMP. The other activity is designated 'posttransfer' editing and involves deacylation of mischarged Ala-tRNA(Pro). The misacylated Cys-tRNA(Pro) is not edited by ProRS. The chain is Proline--tRNA ligase from Chlamydia trachomatis serovar A (strain ATCC VR-571B / DSM 19440 / HAR-13).